Reading from the N-terminus, the 283-residue chain is Bifunctional protein FolD (283 aa).

NADP(+) contacts are provided by residues 166-168 (GRS) and serine 191.

Belongs to the tetrahydrofolate dehydrogenase/cyclohydrolase family. In terms of assembly, homodimer.

It carries out the reaction (6R)-5,10-methylene-5,6,7,8-tetrahydrofolate + NADP(+) = (6R)-5,10-methenyltetrahydrofolate + NADPH. The enzyme catalyses (6R)-5,10-methenyltetrahydrofolate + H2O = (6R)-10-formyltetrahydrofolate + H(+). Its pathway is one-carbon metabolism; tetrahydrofolate interconversion. In terms of biological role, catalyzes the oxidation of 5,10-methylenetetrahydrofolate to 5,10-methenyltetrahydrofolate and then the hydrolysis of 5,10-methenyltetrahydrofolate to 10-formyltetrahydrofolate. This is Bifunctional protein FolD from Pediococcus pentosaceus (strain ATCC 25745 / CCUG 21536 / LMG 10740 / 183-1w).